Reading from the N-terminus, the 183-residue chain is Large ribosomal subunit protein uL6 (183 aa).

The protein belongs to the universal ribosomal protein uL6 family. In terms of assembly, part of the 50S ribosomal subunit.

Functionally, this protein binds to the 23S rRNA, and is important in its secondary structure. It is located near the subunit interface in the base of the L7/L12 stalk, and near the tRNA binding site of the peptidyltransferase center. In Chlamydia trachomatis serovar A (strain ATCC VR-571B / DSM 19440 / HAR-13), this protein is Large ribosomal subunit protein uL6.